The chain runs to 544 residues: Propane 2-monooxygenase, hydroxylase component large subunit (544 aa).

Fe cation contacts are provided by Glu-97, Glu-127, His-130, Glu-192, Glu-226, and His-229.

Belongs to the TmoA/XamoA family. The propane 2-monooxygenase multicomponent enzyme system is composed of an electron transfer component and a monooxygenase component interacting with the effector protein PrmD. The electron transfer component is composed of a reductase (PrmB), and the monooxygenase component is formed by a large subunit (PrmA) and a small subunit (PrmC). Probably requires the presence of the chaperonin-like protein PrmG to ensure a productive folding, resulting of a soluble PrmA, which leads to the active form of PrmABCD. Fe(2+) serves as cofactor.

The enzyme catalyses propane + NADH + O2 + H(+) = propan-2-ol + NAD(+) + H2O. Component of the propane 2-monooxygenase multicomponent enzyme system which is involved in the degradation of propane via the O2-dependent hydroxylation of propane. Also able to catalyze the oxidation the water contaminant N-nitrosodimethylamine (NDMA). This Rhodococcus jostii (strain RHA1) protein is Propane 2-monooxygenase, hydroxylase component large subunit.